The sequence spans 314 residues: tRNA pseudouridine synthase B (314 aa).

The active-site Nucleophile is the Asp-47.

The protein belongs to the pseudouridine synthase TruB family. Type 1 subfamily.

It carries out the reaction uridine(55) in tRNA = pseudouridine(55) in tRNA. Responsible for synthesis of pseudouridine from uracil-55 in the psi GC loop of transfer RNAs. The sequence is that of tRNA pseudouridine synthase B from Vibrio campbellii (strain ATCC BAA-1116).